The sequence spans 306 residues: tRNA dimethylallyltransferase (306 aa).

Residue 6–13 (GPTASGKS) coordinates ATP. Position 8-13 (8-13 (TASGKS)) interacts with substrate.

This sequence belongs to the IPP transferase family. Monomer. Requires Mg(2+) as cofactor.

The catalysed reaction is adenosine(37) in tRNA + dimethylallyl diphosphate = N(6)-dimethylallyladenosine(37) in tRNA + diphosphate. In terms of biological role, catalyzes the transfer of a dimethylallyl group onto the adenine at position 37 in tRNAs that read codons beginning with uridine, leading to the formation of N6-(dimethylallyl)adenosine (i(6)A). The protein is tRNA dimethylallyltransferase of Sphingopyxis alaskensis (strain DSM 13593 / LMG 18877 / RB2256) (Sphingomonas alaskensis).